Reading from the N-terminus, the 428-residue chain is Methyl-branched lipid omega-hydroxylase (428 aa).

C379 contributes to the heme binding site.

It belongs to the cytochrome P450 family. Requires heme as cofactor.

The catalysed reaction is a methyl-branched lipid + O2 + 2 reduced ferredoxin [iron-sulfur] cluster + 2 H(+) = an omega-hydroxy-methyl-branched lipid + H2O + 2 oxidized ferredoxin [iron-sulfur] cluster.. It carries out the reaction cholest-4-en-3-one + 6 reduced [2Fe-2S]-[ferredoxin] + 3 O2 + 5 H(+) = (25R)-3-oxocholest-4-en-26-oate + 6 oxidized [2Fe-2S]-[ferredoxin] + 4 H2O. The protein operates within lipid metabolism; branched-chain fatty acid metabolism. In terms of biological role, primarily hydroxylates the omega-carbon of a number of methyl-branched lipids, including (2E,6E)-farnesol, phytanate, geranylgeraniol, 15-methylpalmitate and (2E,6E)-farnesyl diphosphate. Also catalyzes the sequential oxidation of the terminal methyl of cholest-4-en-3-one into (25R)-26-hydroxycholest-4-en-3-one (alcohol), (25R)-26-oxocholest-4-en-3-one (aldehyde), to finally yield the carboxylic acid (25R)-3-oxocholest-4-en-26-oate. Also able to sequentially oxidize cholesterol itself, not only cholest-4-en-3-one. In Mycobacterium tuberculosis (strain CDC 1551 / Oshkosh), this protein is Methyl-branched lipid omega-hydroxylase (cyp124).